The following is a 177-amino-acid chain: Putative adenylate kinase (177 aa).

Positions 10, 12, 13, 14, and 15 each coordinate ATP. The NMP stretch occupies residues 30 to 53 (DITEAVKKYKLYTEKDEDMDSYVI). An LID region spans residues 103 to 113 (KRGYKPKKVLE). Arg-104 contacts ATP.

This sequence belongs to the adenylate kinase family. AK6 subfamily. In terms of assembly, interacts with uS11. Not a structural component of 40S pre-ribosomes, but transiently interacts with them by binding to uS11.

The enzyme catalyses AMP + ATP = 2 ADP. The catalysed reaction is ATP + H2O = ADP + phosphate + H(+). Its function is as follows. Broad-specificity nucleoside monophosphate (NMP) kinase that catalyzes the reversible transfer of the terminal phosphate group between nucleoside triphosphates and monophosphates. Also has ATPase activity. Involved in the late maturation steps of the 30S ribosomal particles, specifically 16S rRNA maturation. While NMP activity is not required for ribosome maturation, ATPase activity is. Associates transiently with small ribosomal subunit protein uS11. ATP hydrolysis breaks the interaction with uS11. May temporarily remove uS11 from the ribosome to enable a conformational change of the ribosomal RNA that is needed for the final maturation step of the small ribosomal subunit. This Methanocaldococcus jannaschii (strain ATCC 43067 / DSM 2661 / JAL-1 / JCM 10045 / NBRC 100440) (Methanococcus jannaschii) protein is Putative adenylate kinase.